Here is a 261-residue protein sequence, read N- to C-terminus: Triosephosphate isomerase (261 aa).

2 residues coordinate D-glyceraldehyde 3-phosphate: asparagine 11 and lysine 13. Histidine 102 (electrophile) is an active-site residue. The active-site Proton acceptor is the glutamate 174. Residues glycine 180, leucine 239, and glycine 241 each contribute to the D-glyceraldehyde 3-phosphate site.

Belongs to the triosephosphate isomerase family. As to quaternary structure, homodimer.

It catalyses the reaction D-glyceraldehyde 3-phosphate = dihydroxyacetone phosphate. It functions in the pathway carbohydrate biosynthesis; gluconeogenesis. It participates in carbohydrate degradation; glycolysis; D-glyceraldehyde 3-phosphate from glycerone phosphate: step 1/1. In terms of biological role, catalyzes the interconversion of glyceraldehyde 3-phosphate and dihydroxyacetone phosphate in the glycolytic and gluconeogenic pathways. The chain is Triosephosphate isomerase from Entamoeba histolytica (strain ATCC 30459 / HM-1:IMSS / ABRM).